Reading from the N-terminus, the 454-residue chain is GTPase Obg (454 aa).

Positions 2–159 (SDFVDEAVLH…VDIRLELKTI (158 aa)) constitute an Obg domain. Residues 60-87 (YQRRPHRKAENGAPGQGSNRSGASGADL) are disordered. An OBG-type G domain is found at 160 to 335 (ADVGLVGFPS…LAYALGEQVA (176 aa)). GTP contacts are provided by residues 166 to 173 (GFPSAGKS), 191 to 195 (FTTLV), 212 to 215 (DVPG), 287 to 290 (NKID), and 316 to 318 (SAA). Mg(2+)-binding residues include serine 173 and threonine 193. Residues 353–435 (PREIGEIPFQ…DNPVVFDWDP (83 aa)) enclose the OCT domain.

It belongs to the TRAFAC class OBG-HflX-like GTPase superfamily. OBG GTPase family. In terms of assembly, monomer. Mg(2+) is required as a cofactor.

Its subcellular location is the cytoplasm. In terms of biological role, an essential GTPase which binds GTP, GDP and possibly (p)ppGpp with moderate affinity, with high nucleotide exchange rates and a fairly low GTP hydrolysis rate. Plays a role in control of the cell cycle, stress response, ribosome biogenesis and in those bacteria that undergo differentiation, in morphogenesis control. This chain is GTPase Obg, found in Thermobifida fusca (strain YX).